Consider the following 340-residue polypeptide: UPF0324 membrane protein BA_5405/GBAA_5405/BAS5024 (340 aa).

A run of 10 helical transmembrane segments spans residues 13-35 (FGFSQGIGITLLIAIVAKYLAEL), 40-59 (IMGQLVIAILIGMVWRAAIG), 99-118 (VLVIAAVVITFTLFVVYGLT), 128-150 (GILTACGTAICGAAAVVAIAPQV), 157-179 (TAVGAAIIAILGTIFTLIYTLLY), 189-211 (YGVFSGATLHEIAHVIAAAAPGG), 218-240 (AVIVKLTRVTMLVPVAILIGVWF), 255-277 (LPIPWFIFGFLAMSAVHSLGIIP), 279-301 (VVAGYIVVLAYMLIAMAMAGLGL), and 316-338 (FVAGLIGSVCLSVLGYVLVYALG).

This sequence belongs to the UPF0324 family.

Its subcellular location is the cell membrane. The protein is UPF0324 membrane protein BA_5405/GBAA_5405/BAS5024 of Bacillus anthracis.